Here is a 417-residue protein sequence, read N- to C-terminus: Hydrogen cyanide synthase subunit HcnC (417 aa).

A signal peptide spans 1 to 18; sequence MNRTYDIVIAGGGVIGAS. Residue 7-21 coordinates FAD; the sequence is IVIAGGGVIGASCAY. C19 is lipidated: N-palmitoyl cysteine. Residue C19 is the site of S-diacylglycerol cysteine attachment. Residues 46–66 traverse the membrane as a helical segment; that stretch reads SAGGLWAIGESVGLGCGVIFF.

The protein belongs to the FAD-dependent glycerol-3-phosphate dehydrogenase family. In terms of assembly, heterotrimer of HcnA, HcnB and HcnC. FAD serves as cofactor.

Its subcellular location is the cell membrane. It catalyses the reaction glycine + 2 A = hydrogen cyanide + 2 AH2 + CO2. With respect to regulation, oxygen is necessary for cyanogenesis. Activated by succinate, glycine methyl ester, glucose and D,L-methionine in addition to glycine. Phenazine methosulfate, methylene blue, 2,6-dichlorophenolindophenol (DCIP) and ferricyanide can replace oxygen for the reaction. Inhibited by pyrrolnitrin and acriflavine at 1 mM concentration. In terms of biological role, a three-component membrane-bound flavoenzyme that catalyzes the formation of hydrogen cyanide, a secondary metabolite, by transfer of electrons to a cyanide-resistant branch of the aerobic respiratory chain. This Pseudomonas aeruginosa (strain ATCC 15692 / DSM 22644 / CIP 104116 / JCM 14847 / LMG 12228 / 1C / PRS 101 / PAO1) protein is Hydrogen cyanide synthase subunit HcnC.